Reading from the N-terminus, the 283-residue chain is Thymidylate synthase (283 aa).

R22 serves as a coordination point for dUMP. C160 functions as the Nucleophile in the catalytic mechanism. DUMP is bound by residues 180–183 (RSCD), N191, and 221–223 (HIY). Position 183 (D183) interacts with (6R)-5,10-methylene-5,6,7,8-tetrahydrofolate. S282 contacts (6R)-5,10-methylene-5,6,7,8-tetrahydrofolate.

This sequence belongs to the thymidylate synthase family. Bacterial-type ThyA subfamily. Homodimer.

Its subcellular location is the cytoplasm. The catalysed reaction is dUMP + (6R)-5,10-methylene-5,6,7,8-tetrahydrofolate = 7,8-dihydrofolate + dTMP. Its pathway is pyrimidine metabolism; dTTP biosynthesis. Functionally, catalyzes the reductive methylation of 2'-deoxyuridine-5'-monophosphate (dUMP) to 2'-deoxythymidine-5'-monophosphate (dTMP) while utilizing 5,10-methylenetetrahydrofolate (mTHF) as the methyl donor and reductant in the reaction, yielding dihydrofolate (DHF) as a by-product. This enzymatic reaction provides an intracellular de novo source of dTMP, an essential precursor for DNA biosynthesis. The sequence is that of Thymidylate synthase from Shewanella sediminis (strain HAW-EB3).